The primary structure comprises 364 residues: D-alanine--D-alanine ligase (364 aa).

Positions 134–347 constitute an ATP-grasp domain; it reads RRLACINGLK…YPDLLDELIN (214 aa). 167–222 is a binding site for ATP; that stretch reads ASEFGWPLFVKPCSLGSSVGIHKANNMDELNAAVADALRYDEEILVEEFIVGREIE. Mg(2+)-binding residues include Asp-300, Glu-314, and Asn-316.

This sequence belongs to the D-alanine--D-alanine ligase family. The cofactor is Mg(2+). It depends on Mn(2+) as a cofactor.

Its subcellular location is the cytoplasm. The catalysed reaction is 2 D-alanine + ATP = D-alanyl-D-alanine + ADP + phosphate + H(+). It participates in cell wall biogenesis; peptidoglycan biosynthesis. Functionally, cell wall formation. This chain is D-alanine--D-alanine ligase, found in Legionella pneumophila (strain Paris).